The following is a 203-amino-acid chain: Glycerol-3-phosphate acyltransferase (203 aa).

4 helical membrane-spanning segments follow: residues 4-24 (LVLLIIIGAYLLGSISSAVLI), 80-100 (PFLLGIIGIAACLGHIYPIFF), 116-136 (APIGWDLSGMLIGTWLLTVFI), and 138-158 (GYSSLGSLITALAAPLLTWFV).

This sequence belongs to the PlsY family. Probably interacts with PlsX.

The protein resides in the cell inner membrane. The catalysed reaction is an acyl phosphate + sn-glycerol 3-phosphate = a 1-acyl-sn-glycero-3-phosphate + phosphate. The protein operates within lipid metabolism; phospholipid metabolism. Functionally, catalyzes the transfer of an acyl group from acyl-phosphate (acyl-PO(4)) to glycerol-3-phosphate (G3P) to form lysophosphatidic acid (LPA). This enzyme utilizes acyl-phosphate as fatty acyl donor, but not acyl-CoA or acyl-ACP. This is Glycerol-3-phosphate acyltransferase from Photobacterium profundum (strain SS9).